A 130-amino-acid chain; its full sequence is Transcription antitermination protein NusB (130 aa).

The protein belongs to the NusB family.

Its function is as follows. Involved in transcription antitermination. Required for transcription of ribosomal RNA (rRNA) genes. Binds specifically to the boxA antiterminator sequence of the ribosomal RNA (rrn) operons. This Bacillus velezensis (strain DSM 23117 / BGSC 10A6 / LMG 26770 / FZB42) (Bacillus amyloliquefaciens subsp. plantarum) protein is Transcription antitermination protein NusB.